We begin with the raw amino-acid sequence, 475 residues long: Ribulose bisphosphate carboxylase large chain (475 aa).

The propeptide occupies 1–2; the sequence is MS. Pro-3 is modified (N-acetylproline). Lys-14 is subject to N6,N6,N6-trimethyllysine. Substrate contacts are provided by Asn-123 and Thr-173. Lys-175 serves as the catalytic Proton acceptor. Position 177 (Lys-177) interacts with substrate. Mg(2+)-binding residues include Lys-201, Asp-203, and Glu-204. At Lys-201 the chain carries N6-carboxylysine. His-294 serves as the catalytic Proton acceptor. Substrate is bound by residues Arg-295, His-327, and Ser-379.

It belongs to the RuBisCO large chain family. Type I subfamily. Heterohexadecamer of 8 large chains and 8 small chains; disulfide-linked. The disulfide link is formed within the large subunit homodimers. The cofactor is Mg(2+). The disulfide bond which can form in the large chain dimeric partners within the hexadecamer appears to be associated with oxidative stress and protein turnover.

The protein localises to the plastid. It localises to the chloroplast. It catalyses the reaction 2 (2R)-3-phosphoglycerate + 2 H(+) = D-ribulose 1,5-bisphosphate + CO2 + H2O. The enzyme catalyses D-ribulose 1,5-bisphosphate + O2 = 2-phosphoglycolate + (2R)-3-phosphoglycerate + 2 H(+). RuBisCO catalyzes two reactions: the carboxylation of D-ribulose 1,5-bisphosphate, the primary event in carbon dioxide fixation, as well as the oxidative fragmentation of the pentose substrate in the photorespiration process. Both reactions occur simultaneously and in competition at the same active site. This chain is Ribulose bisphosphate carboxylase large chain, found in Nandina domestica (Heavenly bamboo).